The primary structure comprises 432 residues: Adenylosuccinate synthetase (432 aa).

GTP contacts are provided by residues 12-18 (GDEGKGK) and 40-42 (GHT). Asp13 serves as the catalytic Proton acceptor. Mg(2+)-binding residues include Asp13 and Gly40. IMP contacts are provided by residues 13–16 (DEGK), 38–41 (NAGH), Thr129, Arg143, Gln224, Thr239, and Arg303. His41 functions as the Proton donor in the catalytic mechanism. 299 to 305 (VTTGRRR) is a binding site for substrate. GTP is bound by residues Arg305, 331–333 (KLD), and 413–415 (GVG).

It belongs to the adenylosuccinate synthetase family. In terms of assembly, homodimer. Mg(2+) is required as a cofactor.

It is found in the cytoplasm. The catalysed reaction is IMP + L-aspartate + GTP = N(6)-(1,2-dicarboxyethyl)-AMP + GDP + phosphate + 2 H(+). Its pathway is purine metabolism; AMP biosynthesis via de novo pathway; AMP from IMP: step 1/2. Functionally, plays an important role in the de novo pathway of purine nucleotide biosynthesis. Catalyzes the first committed step in the biosynthesis of AMP from IMP. The sequence is that of Adenylosuccinate synthetase from Mycolicibacterium paratuberculosis (strain ATCC BAA-968 / K-10) (Mycobacterium paratuberculosis).